A 246-amino-acid chain; its full sequence is Hsp70 nucleotide exchange factor fes-1 (246 aa).

A compositionally biased stretch (polar residues) spans 23–40 (QSYHSNGAPTPNNNSGPA). The segment at 23 to 63 (QSYHSNGAPTPNNNSGPATGTGAVATSPAPQVTGSGPRPVD) is disordered. ARM repeat units lie at residues 48 to 92 (TSPA…DPSP), 113 to 152 (LDNANLLEELSLWSPLISLLDHEDEDMRYHAAWCLGTAVQ), 155 to 196 (QKTQ…SAVR), and 214 to 244 (HEVLVNNGTKVDAADMDKVDEVIDVLRNKAK).

Belongs to the FES1 family.

It localises to the cytoplasm. Functionally, functions as a nucleotide exchange factor (NEF) for Hsp70 chaperones which accelerates the release of ADP. Required for fully efficient Hsp70-mediated folding of proteins. This Neurospora crassa (strain ATCC 24698 / 74-OR23-1A / CBS 708.71 / DSM 1257 / FGSC 987) protein is Hsp70 nucleotide exchange factor fes-1 (fes-1).